The chain runs to 320 residues: Phosphate acyltransferase (320 aa).

This sequence belongs to the PlsX family. As to quaternary structure, homodimer. Probably interacts with PlsY.

Its subcellular location is the cytoplasm. It catalyses the reaction a fatty acyl-[ACP] + phosphate = an acyl phosphate + holo-[ACP]. It functions in the pathway lipid metabolism; phospholipid metabolism. Catalyzes the reversible formation of acyl-phosphate (acyl-PO(4)) from acyl-[acyl-carrier-protein] (acyl-ACP). This enzyme utilizes acyl-ACP as fatty acyl donor, but not acyl-CoA. The protein is Phosphate acyltransferase of Chlamydia pneumoniae (Chlamydophila pneumoniae).